Consider the following 257-residue polypeptide: MALAKRIIPCFDVTAGRVVKGVNFVELRDAGDPVEIARRYDAQGADELTFLDITATSDGRDLILPIIEAVASQVFIPLTVGGGVRAVEDVRRLLNAGADKVSMNSSAVANPPLVRDAADKYGSQCIVVAIDAKRVSADGEPPRWEVFTHGGRKGTGLDAVEWARKMAELGAGEILLTSMDRDGTKAGFDLALTRAVSDAVPVPVIASGGVGSLEHLAAGITEGHADAVLAASIFHYGEHTVGEAKRFMAERGIAVRL.

Active-site residues include Asp12 and Asp131.

This sequence belongs to the HisA/HisF family. As to quaternary structure, heterodimer of HisH and HisF.

The protein localises to the cytoplasm. It catalyses the reaction 5-[(5-phospho-1-deoxy-D-ribulos-1-ylimino)methylamino]-1-(5-phospho-beta-D-ribosyl)imidazole-4-carboxamide + L-glutamine = D-erythro-1-(imidazol-4-yl)glycerol 3-phosphate + 5-amino-1-(5-phospho-beta-D-ribosyl)imidazole-4-carboxamide + L-glutamate + H(+). It participates in amino-acid biosynthesis; L-histidine biosynthesis; L-histidine from 5-phospho-alpha-D-ribose 1-diphosphate: step 5/9. In terms of biological role, IGPS catalyzes the conversion of PRFAR and glutamine to IGP, AICAR and glutamate. The HisF subunit catalyzes the cyclization activity that produces IGP and AICAR from PRFAR using the ammonia provided by the HisH subunit. The protein is Imidazole glycerol phosphate synthase subunit HisF of Burkholderia mallei (strain NCTC 10247).